A 215-amino-acid chain; its full sequence is Fibroblast growth factor 17 (215 aa).

A signal peptide spans Met-1–Ala-22. Asn-137 carries an N-linked (GlcNAc...) asparagine glycan.

The protein belongs to the heparin-binding growth factors family.

It is found in the secreted. Its function is as follows. Involved in dorsal-ventral embryonic patterning, by promoting expression of bone morphogenetic protein (BMP) antagonists such as chd. Also involved in anterior-posterior neural patterning and in mesoderm induction. This Danio rerio (Zebrafish) protein is Fibroblast growth factor 17 (fgf17).